Reading from the N-terminus, the 148-residue chain is Ribonuclease H (148 aa).

The region spanning Asp3–Ala144 is the RNase H type-1 domain. Residues Asp12, Glu50, Asp72, and Asp136 each contribute to the Mg(2+) site. The disordered stretch occupies residues Gly125–Arg148.

This sequence belongs to the RNase H family. In terms of assembly, monomer. It depends on Mg(2+) as a cofactor.

It localises to the cytoplasm. It catalyses the reaction Endonucleolytic cleavage to 5'-phosphomonoester.. In terms of biological role, endonuclease that specifically degrades the RNA of RNA-DNA hybrids. The chain is Ribonuclease H from Pseudomonas paraeruginosa (strain DSM 24068 / PA7) (Pseudomonas aeruginosa (strain PA7)).